The primary structure comprises 298 residues: Protease HtpX homolog (298 aa).

Transmembrane regions (helical) follow at residues 15 to 35 (LIMV…GYLF) and 38 to 58 (SPWT…LIMW). H143 is a binding site for Zn(2+). The active site involves E144. H147 lines the Zn(2+) pocket. The next 2 helical transmembrane spans lie at 153–173 (ILLS…SGIA) and 197–217 (IIFK…SASL). E227 contributes to the Zn(2+) binding site.

The protein belongs to the peptidase M48B family. Zn(2+) is required as a cofactor.

It localises to the cell membrane. This chain is Protease HtpX homolog, found in Lactobacillus acidophilus (strain ATCC 700396 / NCK56 / N2 / NCFM).